The sequence spans 392 residues: Speckle-type POZ protein-like (392 aa).

The MATH domain maps to 31–161; it reads KFSYMWTINN…DDKLTLYCEV (131 aa). A BTB domain is found at 200–267; it reads TDCSLFVEGK…IYTGGTPHVD (68 aa).

The protein belongs to the Tdpoz family. Homodimer. Heterodimer with SPOP. Component of cullin-RING-based BCR (BTB-CUL3-RBX1) E3 ubiquitin-protein ligase complexes containing homodimeric SPOPL or the heterodimer formed by SPOP and SPOPL.

The protein resides in the nucleus. The protein operates within protein modification; protein ubiquitination. Functionally, component of a cullin-RING-based BCR (BTB-CUL3-RBX1) E3 ubiquitin-protein ligase complex that mediates the ubiquitination and subsequent proteasomal degradation of target proteins, but with relatively low efficiency. The chain is Speckle-type POZ protein-like (spopl) from Xenopus laevis (African clawed frog).